The following is a 989-amino-acid chain: Cation-chloride cotransporter 1 (989 aa).

Residues Met-1–Ala-10 are compositionally biased toward acidic residues. The interval Met-1–Gly-29 is disordered. Residues Met-1–Phe-132 lie on the Cytoplasmic side of the membrane. The chain crosses the membrane as a helical span at residues Gly-133–Ile-153. At Arg-154–Ser-167 the chain is on the extracellular side. A helical membrane pass occupies residues Leu-168–Ile-188. At Ala-189–Ser-214 the chain is on the cytoplasmic side. Residues Ile-215–Val-235 traverse the membrane as a helical segment. The Extracellular segment spans residues Glu-236 to Gln-280. N-linked (GlcNAc...) asparagine glycosylation is found at Asn-256 and Asn-261. The helical transmembrane segment at Val-281 to Ile-301 threads the bilayer. Topologically, residues Asn-302–Val-304 are cytoplasmic. A helical membrane pass occupies residues Ala-305–Ile-325. Residues Ala-326–Ser-365 lie on the Extracellular side of the membrane. Asn-363 carries an N-linked (GlcNAc...) asparagine glycan. The chain crosses the membrane as a helical span at residues Ile-366–Ala-386. Topologically, residues Gly-387–Thr-405 are cytoplasmic. A helical transmembrane segment spans residues Leu-406–Leu-426. Over Ala-427–Thr-441 the chain is Extracellular. The chain crosses the membrane as a helical span at residues Val-442–Ala-462. At Leu-463 to Ser-498 the chain is on the cytoplasmic side. The chain crosses the membrane as a helical span at residues Ala-499–Ile-519. At Thr-520 to Thr-522 the chain is on the extracellular side. A helical transmembrane segment spans residues Ile-523 to Leu-543. Residues Leu-544–Pro-551 lie on the Cytoplasmic side of the membrane. A helical membrane pass occupies residues Arg-552 to Met-572. Over Phe-573–Ser-578 the chain is Extracellular. Residues Phe-579–Lys-599 form a helical membrane-spanning segment. Residues Ala-600–Thr-989 lie on the Cytoplasmic side of the membrane.

Belongs to the SLC12A transporter family. In terms of tissue distribution, expressed in roots, stems and leaves with higher expression in root and leaf tips.

Its subcellular location is the membrane. Probable cation/chloride cotransporter that may mediate potassium-chloride cotransport. Involved in plant development and K(+) and Cl(-) homeostasis. May not be involved in sodium-chloride cotransport. The protein is Cation-chloride cotransporter 1 (CCC1) of Oryza sativa subsp. japonica (Rice).